The following is a 427-amino-acid chain: 3-phosphoshikimate 1-carboxyvinyltransferase (427 aa).

3 residues coordinate 3-phosphoshikimate: Lys-27, Ser-28, and Arg-32. A phosphoenolpyruvate-binding site is contributed by Lys-27. Phosphoenolpyruvate contacts are provided by Gly-95 and Arg-123. 3-phosphoshikimate is bound by residues Ser-166, Ser-167, Gln-168, Ser-192, Asp-305, and Lys-332. Residue Gln-168 coordinates phosphoenolpyruvate. The Proton acceptor role is filled by Asp-305. Arg-336 and Arg-377 together coordinate phosphoenolpyruvate.

The protein belongs to the EPSP synthase family. In terms of assembly, monomer.

Its subcellular location is the cytoplasm. It carries out the reaction 3-phosphoshikimate + phosphoenolpyruvate = 5-O-(1-carboxyvinyl)-3-phosphoshikimate + phosphate. It functions in the pathway metabolic intermediate biosynthesis; chorismate biosynthesis. In terms of biological role, catalyzes the transfer of the enolpyruvyl moiety of phosphoenolpyruvate (PEP) to the 5-hydroxyl of shikimate-3-phosphate (S3P) to produce enolpyruvyl shikimate-3-phosphate and inorganic phosphate. The chain is 3-phosphoshikimate 1-carboxyvinyltransferase from Aeropyrum pernix (strain ATCC 700893 / DSM 11879 / JCM 9820 / NBRC 100138 / K1).